Here is a 231-residue protein sequence, read N- to C-terminus: Orotate phosphoribosyltransferase (231 aa).

Lysine 29 contacts 5-phospho-alpha-D-ribose 1-diphosphate. Phenylalanine 37–phenylalanine 38 contacts orotate. 5-phospho-alpha-D-ribose 1-diphosphate contacts are provided by residues tyrosine 75–lysine 76, arginine 107, lysine 108, lysine 111, histidine 113, and aspartate 133–alanine 141. Residues serine 137 and arginine 165 each contribute to the orotate site.

This sequence belongs to the purine/pyrimidine phosphoribosyltransferase family. PyrE subfamily. In terms of assembly, homodimer.

The catalysed reaction is orotidine 5'-phosphate + diphosphate = orotate + 5-phospho-alpha-D-ribose 1-diphosphate. Its pathway is pyrimidine metabolism; UMP biosynthesis via de novo pathway; UMP from orotate: step 1/2. Catalyzes the transfer of a ribosyl phosphate group from 5-phosphoribose 1-diphosphate to orotate, leading to the formation of orotidine monophosphate (OMP). In Podospora anserina (Pleurage anserina), this protein is Orotate phosphoribosyltransferase (URA5).